Reading from the N-terminus, the 59-residue chain is MAKLEITLKRSVIGRPEDQRITVRTLGLKKTNQTVVHEDNAAIRGMINKVSHLVSVKEL.

The protein belongs to the universal ribosomal protein uL30 family. Part of the 50S ribosomal subunit.

This Bacillus licheniformis (strain ATCC 14580 / DSM 13 / JCM 2505 / CCUG 7422 / NBRC 12200 / NCIMB 9375 / NCTC 10341 / NRRL NRS-1264 / Gibson 46) protein is Large ribosomal subunit protein uL30.